Consider the following 196-residue polypeptide: ATP-dependent Clp protease proteolytic subunit (196 aa).

The active-site Nucleophile is serine 99. Histidine 124 is a catalytic residue.

The protein belongs to the peptidase S14 family. As to quaternary structure, fourteen ClpP subunits assemble into 2 heptameric rings which stack back to back to give a disk-like structure with a central cavity, resembling the structure of eukaryotic proteasomes.

Its subcellular location is the cytoplasm. It carries out the reaction Hydrolysis of proteins to small peptides in the presence of ATP and magnesium. alpha-casein is the usual test substrate. In the absence of ATP, only oligopeptides shorter than five residues are hydrolyzed (such as succinyl-Leu-Tyr-|-NHMec, and Leu-Tyr-Leu-|-Tyr-Trp, in which cleavage of the -Tyr-|-Leu- and -Tyr-|-Trp bonds also occurs).. In terms of biological role, cleaves peptides in various proteins in a process that requires ATP hydrolysis. Has a chymotrypsin-like activity. Plays a major role in the degradation of misfolded proteins. This chain is ATP-dependent Clp protease proteolytic subunit, found in Helicobacter hepaticus (strain ATCC 51449 / 3B1).